The primary structure comprises 906 residues: Protein translocase subunit SecA (906 aa).

Residues Q86, G104 to T108, and D511 each bind ATP. The segment covering E852–D888 has biased composition (basic and acidic residues). The interval E852 to E906 is disordered. Zn(2+)-binding residues include C890, C892, C901, and H902. Positions K896 to E906 are enriched in basic residues.

It belongs to the SecA family. As to quaternary structure, monomer and homodimer. Part of the essential Sec protein translocation apparatus which comprises SecA, SecYEG and auxiliary proteins SecDF-YajC and YidC. Zn(2+) is required as a cofactor.

Its subcellular location is the cell inner membrane. The protein resides in the cytoplasm. The catalysed reaction is ATP + H2O + cellular proteinSide 1 = ADP + phosphate + cellular proteinSide 2.. Part of the Sec protein translocase complex. Interacts with the SecYEG preprotein conducting channel. Has a central role in coupling the hydrolysis of ATP to the transfer of proteins into and across the cell membrane, serving both as a receptor for the preprotein-SecB complex and as an ATP-driven molecular motor driving the stepwise translocation of polypeptide chains across the membrane. This is Protein translocase subunit SecA from Francisella tularensis subsp. tularensis (strain SCHU S4 / Schu 4).